A 375-amino-acid polypeptide reads, in one-letter code: Anhydro-N-acetylmuramic acid kinase (375 aa).

Residue 19–26 (GTSLDGVD) participates in ATP binding.

It belongs to the anhydro-N-acetylmuramic acid kinase family.

The catalysed reaction is 1,6-anhydro-N-acetyl-beta-muramate + ATP + H2O = N-acetyl-D-muramate 6-phosphate + ADP + H(+). Its pathway is amino-sugar metabolism; 1,6-anhydro-N-acetylmuramate degradation. The protein operates within cell wall biogenesis; peptidoglycan recycling. Functionally, catalyzes the specific phosphorylation of 1,6-anhydro-N-acetylmuramic acid (anhMurNAc) with the simultaneous cleavage of the 1,6-anhydro ring, generating MurNAc-6-P. Is required for the utilization of anhMurNAc either imported from the medium or derived from its own cell wall murein, and thus plays a role in cell wall recycling. In Ruegeria sp. (strain TM1040) (Silicibacter sp.), this protein is Anhydro-N-acetylmuramic acid kinase.